We begin with the raw amino-acid sequence, 145 residues long: Copper transporter 6 (145 aa).

2 consecutive transmembrane segments (helical) span residues 47–67 (LGMY…VEWL) and 99–119 (YLVM…AIAG).

Belongs to the copper transporter (Ctr) (TC 1.A.56) family. SLC31A subfamily.

Its subcellular location is the membrane. Functionally, involved in the transport of copper. This Arabidopsis thaliana (Mouse-ear cress) protein is Copper transporter 6 (COPT6).